The chain runs to 421 residues: Glucan 1,3-beta-glucosidase (421 aa).

Residues 1–15 (MKLTKLVALAGAALA) form the signal peptide. The active-site Proton donor is the Glu-213. Disulfide bonds link Cys-296-Cys-419 and Cys-321-Cys-347. Glu-313 functions as the Nucleophile in the catalytic mechanism.

Belongs to the glycosyl hydrolase 5 (cellulase A) family.

The protein resides in the secreted. It catalyses the reaction Successive hydrolysis of beta-D-glucose units from the non-reducing ends of (1-&gt;3)-beta-D-glucans, releasing alpha-glucose.. This is Glucan 1,3-beta-glucosidase (EXG1) from Yarrowia lipolytica (strain CLIB 122 / E 150) (Yeast).